The primary structure comprises 792 residues: X-ray radiation resistance-associated protein 1 (792 aa).

6 LRR repeats span residues 104–125 (DLCTINAKENDFKHFHSVIYIN), 141–155 (ALKELDLAFNGIKTI), 164–184 (LLEFLDLSFNSLTVEAICDLG), 188–209 (HLRVLLLTGNGLTSLPPNLAVA), 229–250 (ALETLMLDDNRLSNPSCFASLA), and 254–275 (RLKKLSLDENRIIRIPYLQQVQ). Disordered regions lie at residues 490-517 (AEDLPTTKSTSVESEMPTENLEGHSPSC), 537-562 (TLSHLSDTTVRLSPERPSDEDSKSTE), and 577-601 (IHKDDLELKEKDQKKPPTAPREVKG). Positions 549 to 560 (SPERPSDEDSKS) are enriched in basic and acidic residues. Positions 723-745 (HKQYLEAKRLLKEFQARYRQLVS) form a coiled coil.

In terms of tissue distribution, expressed predominantly in testis followed by prostate and ovary. Low levels found in other tissues including peripheral blood leukocytes, spleen, thymus, small intestine and colon. Also expressed in neuroblastoma, glioma, breast, lung, leukemia, renal, ovarian, prostate and colorectal cancer cell lines.

Its subcellular location is the cytoplasm. The protein resides in the nucleus. Its function is as follows. May be involved in the response of cells to X-ray radiation. This Homo sapiens (Human) protein is X-ray radiation resistance-associated protein 1.